A 678-amino-acid chain; its full sequence is Glycine--tRNA ligase beta subunit (678 aa).

Belongs to the class-II aminoacyl-tRNA synthetase family. As to quaternary structure, tetramer of two alpha and two beta subunits.

The protein resides in the cytoplasm. The catalysed reaction is tRNA(Gly) + glycine + ATP = glycyl-tRNA(Gly) + AMP + diphosphate. The chain is Glycine--tRNA ligase beta subunit from Streptococcus thermophilus (strain ATCC BAA-491 / LMD-9).